The chain runs to 388 residues: Chorismate synthase (388 aa).

NADP(+) contacts are provided by Arg39 and Arg45. Residues Arg130 to Ser132, Asn251 to Ala252, Ala296, Lys311 to Thr315, and Arg337 each bind FMN.

It belongs to the chorismate synthase family. As to quaternary structure, homotetramer. It depends on FMNH2 as a cofactor.

The enzyme catalyses 5-O-(1-carboxyvinyl)-3-phosphoshikimate = chorismate + phosphate. Its pathway is metabolic intermediate biosynthesis; chorismate biosynthesis; chorismate from D-erythrose 4-phosphate and phosphoenolpyruvate: step 7/7. Functionally, catalyzes the anti-1,4-elimination of the C-3 phosphate and the C-6 proR hydrogen from 5-enolpyruvylshikimate-3-phosphate (EPSP) to yield chorismate, which is the branch point compound that serves as the starting substrate for the three terminal pathways of aromatic amino acid biosynthesis. This reaction introduces a second double bond into the aromatic ring system. This is Chorismate synthase from Streptococcus equi subsp. zooepidemicus (strain MGCS10565).